A 146-amino-acid polypeptide reads, in one-letter code: Cytochrome c oxidase subunit 5A, mitochondrial (146 aa).

Residues 1-37 (MLAAALRRCTAAAAARGLLHPVSAPSPAAAVCSIRCY) constitute a mitochondrion transit peptide. An SIFI-degron motif is present at residues 2–16 (LAAALRRCTAAAAAR). Residues K83 and K109 each carry the N6-acetyllysine modification. The residue at position 137 (T137) is a Phosphothreonine.

As to quaternary structure, component of the cytochrome c oxidase (complex IV, CIV), a multisubunit enzyme composed of 14 subunits. The complex is composed of a catalytic core of 3 subunits MT-CO1, MT-CO2 and MT-CO3, encoded in the mitochondrial DNA, and 11 supernumerary subunits COX4I, COX5A, COX5B, COX6A, COX6B, COX6C, COX7A, COX7B, COX7C, COX8 and NDUFA4, which are encoded in the nuclear genome. The complex exists as a monomer or a dimer and forms supercomplexes (SCs) in the inner mitochondrial membrane with NADH-ubiquinone oxidoreductase (complex I, CI) and ubiquinol-cytochrome c oxidoreductase (cytochrome b-c1 complex, complex III, CIII), resulting in different assemblies (supercomplex SCI(1)III(2)IV(1) and megacomplex MCI(2)III(2)IV(2)). Interacts with AFG1L. Interacts with RAB5IF. In terms of processing, in response to mitochondrial stress, the precursor protein is ubiquitinated by the SIFI complex in the cytoplasm before mitochondrial import, leading to its degradation. Within the SIFI complex, UBR4 initiates ubiquitin chain that are further elongated or branched by KCMF1. Expressed in the head of epididymal sperm but not in testicular sperm (at protein level).

The protein resides in the mitochondrion inner membrane. The protein operates within energy metabolism; oxidative phosphorylation. Functionally, component of the cytochrome c oxidase, the last enzyme in the mitochondrial electron transport chain which drives oxidative phosphorylation. The respiratory chain contains 3 multisubunit complexes succinate dehydrogenase (complex II, CII), ubiquinol-cytochrome c oxidoreductase (cytochrome b-c1 complex, complex III, CIII) and cytochrome c oxidase (complex IV, CIV), that cooperate to transfer electrons derived from NADH and succinate to molecular oxygen, creating an electrochemical gradient over the inner membrane that drives transmembrane transport and the ATP synthase. Cytochrome c oxidase is the component of the respiratory chain that catalyzes the reduction of oxygen to water. Electrons originating from reduced cytochrome c in the intermembrane space (IMS) are transferred via the dinuclear copper A center (CU(A)) of subunit 2 and heme A of subunit 1 to the active site in subunit 1, a binuclear center (BNC) formed by heme A3 and copper B (CU(B)). The BNC reduces molecular oxygen to 2 water molecules using 4 electrons from cytochrome c in the IMS and 4 protons from the mitochondrial matrix. In Rattus norvegicus (Rat), this protein is Cytochrome c oxidase subunit 5A, mitochondrial (Cox5a).